The chain runs to 424 residues: Hemagglutinin-esterase (424 aa).

Residues 1–16 (MFLLPRFVLVSCIIGS) form the signal peptide. The interval 7–127 (FVLVSCIIGS…SNDIWMQNKG (121 aa)) is esterase domain 1. Over 17–392 (LGFDNPPTNV…PICVYDPLPL (376 aa)) the chain is Virion surface. The active-site Nucleophile is the Ser40. A disulfide bridge connects residues Cys44 and Cys65. 5 N-linked (GlcNAc...) asparagine; by host glycosylation sites follow: Asn54, Asn89, Asn153, Asn236, and Asn301. 3 cysteine pairs are disulfide-bonded: Cys113–Cys162, Cys197–Cys276, and Cys205–Cys249. Positions 128 to 266 (LFYTQVYKNM…GNYLAISNEL (139 aa)) are receptor binding. The segment at 267–379 (LLTVPTKAIC…RCPTAADINN (113 aa)) is esterase domain 2. Cys307 and Cys312 are joined by a disulfide. Asn316 carries N-linked (GlcNAc...) asparagine; by host glycosylation. Active-site charge relay system residues include Asp326 and His329. A disulfide bridge connects residues Cys347 and Cys371. Asn358 carries an N-linked (GlcNAc...) asparagine; by host glycan. Residues 393-413 (ILLGILLGVAVIIIVVLLLYF) form a helical membrane-spanning segment. Residues 414–424 (MVDNGTRLHDA) are Intravirion-facing. The N-linked (GlcNAc...) asparagine; by host glycan is linked to Asn417.

Belongs to the influenza type C/coronaviruses hemagglutinin-esterase family. In terms of assembly, homodimer; disulfide-linked. Forms a complex with the M protein in the pre-Golgi. Associates then with S-M complex to form a ternary complex S-M-HE. Post-translationally, N-glycosylated in the host RER.

Its subcellular location is the virion membrane. The protein resides in the host cell membrane. The catalysed reaction is N-acetyl-9-O-acetylneuraminate + H2O = N-acetylneuraminate + acetate + H(+). The enzyme catalyses N-acetyl-4-O-acetylneuraminate + H2O = N-acetylneuraminate + acetate + H(+). Its function is as follows. Structural protein that makes short spikes at the surface of the virus. Contains receptor binding and receptor-destroying activities. Mediates de-O-acetylation of N-acetyl-4-O-acetylneuraminic acid, which is probably the receptor determinant recognized by the virus on the surface of erythrocytes and susceptible cells. This receptor-destroying activity is important for virus release as it probably helps preventing self-aggregation and ensures the efficient spread of the progeny virus from cell to cell. May serve as a secondary viral attachment protein for initiating infection, the spike protein being the major one. May become a target for both the humoral and the cellular branches of the immune system. The polypeptide is Hemagglutinin-esterase (Bovine coronavirus (strain LY-138) (BCoV)).